Here is a 161-residue protein sequence, read N- to C-terminus: Cyclic pyranopterin monophosphate synthase (161 aa).

Substrate is bound by residues 75–77 (LCH) and 113–114 (ME). Residue aspartate 128 is part of the active site.

It belongs to the MoaC family. As to quaternary structure, homohexamer; trimer of dimers.

It catalyses the reaction (8S)-3',8-cyclo-7,8-dihydroguanosine 5'-triphosphate = cyclic pyranopterin phosphate + diphosphate. The protein operates within cofactor biosynthesis; molybdopterin biosynthesis. Its function is as follows. Catalyzes the conversion of (8S)-3',8-cyclo-7,8-dihydroguanosine 5'-triphosphate to cyclic pyranopterin monophosphate (cPMP). The protein is Cyclic pyranopterin monophosphate synthase of Methylobacillus flagellatus (strain ATCC 51484 / DSM 6875 / VKM B-1610 / KT).